Consider the following 233-residue polypeptide: MSSIQQNIEHITSQIRYDEQKCGRTPESVQLLAVSKTKPVEAILEAYQAGQTAFGENYVQEGVSKVQHFAEHYPDNRIEWHFIGPIQSNKSRLVAEHFDWVHTIDRTKIAQRLNDQRPSELKPLQVLIQVNTSGEASKSGVTEAEVFELAELISRLPNLTLRGLMSIPANVSDYESQLHEFQKLATLKQTLEAQFPEIDTLSMGMSGDMTAAIEAGSTMVRIGTAIFGARDYS.

N6-(pyridoxal phosphate)lysine is present on K36.

It belongs to the pyridoxal phosphate-binding protein YggS/PROSC family.

Functionally, pyridoxal 5'-phosphate (PLP)-binding protein, which is involved in PLP homeostasis. This is Pyridoxal phosphate homeostasis protein from Vibrio alginolyticus.